The following is a 470-amino-acid chain: Light-independent protochlorophyllide reductase subunit N (470 aa).

[4Fe-4S] cluster is bound by residues Cys24, Cys49, and Cys109.

It belongs to the BchN/ChlN family. Protochlorophyllide reductase is composed of three subunits; ChlL, ChlN and ChlB. Forms a heterotetramer of two ChlB and two ChlN subunits. It depends on [4Fe-4S] cluster as a cofactor.

It catalyses the reaction chlorophyllide a + oxidized 2[4Fe-4S]-[ferredoxin] + 2 ADP + 2 phosphate = protochlorophyllide a + reduced 2[4Fe-4S]-[ferredoxin] + 2 ATP + 2 H2O. It functions in the pathway porphyrin-containing compound metabolism; chlorophyll biosynthesis (light-independent). In terms of biological role, component of the dark-operative protochlorophyllide reductase (DPOR) that uses Mg-ATP and reduced ferredoxin to reduce ring D of protochlorophyllide (Pchlide) to form chlorophyllide a (Chlide). This reaction is light-independent. The NB-protein (ChlN-ChlB) is the catalytic component of the complex. The sequence is that of Light-independent protochlorophyllide reductase subunit N from Acaryochloris marina (strain MBIC 11017).